A 540-amino-acid chain; its full sequence is MSSAAENGEAAPGKQNEEKTYKKTASSAIKGAIQLGIGYTVGNLTSKPERDVLMQDFYVVESVFLPSEGSNLTPAHHYPDFRFKTYAPLAFRYFRELFGIKPDDYLYSICSEPLIELSNPGASGSLFFVTSDDEFIIKTVQHKEAEFLQKLLPGYYMNLNQNPRTLLPKFYGLYCMQSGGINIRIVVMNNVLPRSMRMHFTYDLKGSTYKRRASRKEREKSNPTFKDLDFLQDMHEGLYFDTETYNALMKTLQRDCRVLESFKIMDYSLLLGIHFLDHSLKEKEEETPQNVPDAKRTGMQKVLYSTAMESIQGPGKSGDGIITENPDTMGGIPAKSHRGEKLLLFMGIIDILQSYRLMKKLEHSWKALVYDGDTVSVHRPSFYADRFLKFMNSRVFKKIQALKASPSKKRCNSIAALKATSQEIVSSISQEWKDEKRDLLTEGQSFSSLDEEALGSRHRPDLVPSTPSLFEAASLATTISSSSLYVNEHYPHDRPTLYSNSKGLPSSSTFTLEEGTIYLTAEPNTLEVQDDNASVLDVYL.

The tract at residues 1 to 21 is disordered; the sequence is MSSAAENGEAAPGKQNEEKTY. The region spanning 25–395 is the PIPK domain; it reads ASSAIKGAIQ…RFLKFMNSRV (371 aa). 3 positions are modified to phosphoserine: Ser-445, Ser-447, and Ser-448.

As to quaternary structure, interacts with RAC1, AJUBA, PLD1, PLD2 and ARF1. As to expression, detected in heart, pancreas, brain, kidney, skeletal muscle and lung.

It is found in the cytoplasm. Its subcellular location is the cytosol. The protein resides in the cell membrane. It localises to the endomembrane system. The enzyme catalyses a 1,2-diacyl-sn-glycero-3-phospho-(1D-myo-inositol 4-phosphate) + ATP = a 1,2-diacyl-sn-glycero-3-phospho-(1D-myo-inositol-4,5-bisphosphate) + ADP + H(+). The catalysed reaction is 1-octadecanoyl-2-(5Z,8Z,11Z,14Z)-eicosatetraenoyl-sn-glycero-3-phospho-1D-myo-inositol 4-phosphate + ATP = 1-octadecanoyl-2-(5Z,8Z,11Z,14Z)-eicosatetraenoyl-sn-glycero-3-phospho-1D-myo-inositol 4,5-bisphosphate + ADP + H(+). It catalyses the reaction 1-octadecanoyl-2-(9Z)-octadecenoyl-sn-glycero-3-phospho-1D-myo-inositol 4-phosphate + ATP = 1-octadecanoyl-2-(9Z)-octadecenoyl-sn-glycero-3-phospho-1D-myo-inositol 4,5-bisphosphate + ADP + H(+). It carries out the reaction 1-octadecanoyl-2-(9Z)-octadecenoyl-sn-glycero-3-phospho-1D-myo-inositol + ATP = 1-octadecanoyl-2-(9Z)-octadecenoyl-sn-glycero-3-phospho-1D-myo-inositol 5-phosphate + ADP + H(+). The enzyme catalyses 1-octadecanoyl-2-(9Z,12Z)-octadecadienoyl-sn-glycero-3-phospho-1D-myo-inositol + ATP = 1-octadecanoyl-2-(9Z,12Z)-octadecadienoyl-sn-glycero-3-phospho-1D-myo-inositol 5-phosphate + ADP + H(+). The catalysed reaction is 1-octadecanoyl-2-(5Z,8Z,11Z,14Z-eicosatetraenoyl)-sn-glycero-3-phospho-(1D-myo-inositol) + ATP = 1-octadecanoyl-2-(5Z,8Z,11Z,14Z)-eicosatetraenoyl-sn-glycero-3-phospho-1D-myo-inositol 5-phosphate + ADP + H(+). It catalyses the reaction 1,2-di-(9Z,12Z)-octadecadienoyl-sn-glycero-3-phospho-1D-myo-inositol + ATP = 1,2-di(9Z,12Z)-octadecadienoyl-sn-glycero-3-phospho-1D-myo-inositol 5-phosphate + ADP + H(+). Its function is as follows. Catalyzes the phosphorylation of phosphatidylinositol 4-phosphate (PtdIns(4)P/PI4P) to form phosphatidylinositol 4,5-bisphosphate (PtdIns(4,5)P2/PIP2), a lipid second messenger that regulates several cellular processes such as signal transduction, vesicle trafficking, actin cytoskeleton dynamics, cell adhesion, and cell motility. PtdIns(4,5)P2 can directly act as a second messenger or can be utilized as a precursor to generate other second messengers: inositol 1,4,5-trisphosphate (IP3), diacylglycerol (DAG) or phosphatidylinositol-3,4,5-trisphosphate (PtdIns(3,4,5)P3/PIP3). Mediates RAC1-dependent reorganization of actin filaments. Contributes to the activation of phospholipase PLD2. Together with PIP5K1A, is required, after stimulation by G-protein coupled receptors, for the synthesis of IP3 that will induce stable platelet adhesion. In Homo sapiens (Human), this protein is Phosphatidylinositol 4-phosphate 5-kinase type-1 beta.